The primary structure comprises 313 residues: Aspartate carbamoyltransferase catalytic subunit (313 aa).

Carbamoyl phosphate contacts are provided by arginine 58 and threonine 59. Lysine 86 lines the L-aspartate pocket. Carbamoyl phosphate is bound by residues arginine 108, histidine 136, and glutamine 139. Residues arginine 169 and arginine 224 each contribute to the L-aspartate site. Carbamoyl phosphate contacts are provided by glycine 265 and proline 266.

This sequence belongs to the aspartate/ornithine carbamoyltransferase superfamily. ATCase family. As to quaternary structure, heterododecamer (2C3:3R2) of six catalytic PyrB chains organized as two trimers (C3), and six regulatory PyrI chains organized as three dimers (R2).

The catalysed reaction is carbamoyl phosphate + L-aspartate = N-carbamoyl-L-aspartate + phosphate + H(+). Its pathway is pyrimidine metabolism; UMP biosynthesis via de novo pathway; (S)-dihydroorotate from bicarbonate: step 2/3. Catalyzes the condensation of carbamoyl phosphate and aspartate to form carbamoyl aspartate and inorganic phosphate, the committed step in the de novo pyrimidine nucleotide biosynthesis pathway. The protein is Aspartate carbamoyltransferase catalytic subunit of Natranaerobius thermophilus (strain ATCC BAA-1301 / DSM 18059 / JW/NM-WN-LF).